We begin with the raw amino-acid sequence, 215 residues long: Large ribosomal subunit protein uL3 (215 aa).

The tract at residues 136–161 (GVSISHRSHGSTGQRQDPGKVFKGKK) is disordered. N5-methylglutamine is present on glutamine 151.

This sequence belongs to the universal ribosomal protein uL3 family. In terms of assembly, part of the 50S ribosomal subunit. Forms a cluster with proteins L14 and L19. In terms of processing, methylated by PrmB.

One of the primary rRNA binding proteins, it binds directly near the 3'-end of the 23S rRNA, where it nucleates assembly of the 50S subunit. In Rickettsia akari (strain Hartford), this protein is Large ribosomal subunit protein uL3.